We begin with the raw amino-acid sequence, 348 residues long: Isopentenyl-diphosphate delta-isomerase (348 aa).

14–15 (RK) provides a ligand contact to substrate. FMN contacts are provided by residues serine 72, 73 to 75 (SMT), serine 103, and asparagine 131. 103–105 (SQR) serves as a coordination point for substrate. Residue glutamine 166 coordinates substrate. A Mg(2+)-binding site is contributed by glutamate 167. Residues lysine 198, threonine 228, 278–280 (GIR), and 299–300 (AR) each bind FMN.

The protein belongs to the IPP isomerase type 2 family. In terms of assembly, homooctamer. Dimer of tetramers. It depends on FMN as a cofactor. The cofactor is NADPH. Mg(2+) serves as cofactor.

The protein resides in the cytoplasm. The catalysed reaction is isopentenyl diphosphate = dimethylallyl diphosphate. Functionally, involved in the biosynthesis of isoprenoids. Catalyzes the 1,3-allylic rearrangement of the homoallylic substrate isopentenyl (IPP) to its allylic isomer, dimethylallyl diphosphate (DMAPP). The chain is Isopentenyl-diphosphate delta-isomerase from Synechococcus sp. (strain ATCC 27144 / PCC 6301 / SAUG 1402/1) (Anacystis nidulans).